The primary structure comprises 78 residues: Large ribosomal subunit protein bL28 (78 aa).

A disordered region spans residues M1–P31.

It belongs to the bacterial ribosomal protein bL28 family.

The protein is Large ribosomal subunit protein bL28 of Pseudarthrobacter chlorophenolicus (strain ATCC 700700 / DSM 12829 / CIP 107037 / JCM 12360 / KCTC 9906 / NCIMB 13794 / A6) (Arthrobacter chlorophenolicus).